The primary structure comprises 212 residues: Peptide methionine sulfoxide reductase MsrA (212 aa).

The active site involves cysteine 52.

Belongs to the MsrA Met sulfoxide reductase family.

It carries out the reaction L-methionyl-[protein] + [thioredoxin]-disulfide + H2O = L-methionyl-(S)-S-oxide-[protein] + [thioredoxin]-dithiol. It catalyses the reaction [thioredoxin]-disulfide + L-methionine + H2O = L-methionine (S)-S-oxide + [thioredoxin]-dithiol. Functionally, has an important function as a repair enzyme for proteins that have been inactivated by oxidation. Catalyzes the reversible oxidation-reduction of methionine sulfoxide in proteins to methionine. This is Peptide methionine sulfoxide reductase MsrA from Cronobacter sakazakii (strain ATCC BAA-894) (Enterobacter sakazakii).